The chain runs to 223 residues: Urease accessory protein UreF (223 aa).

The protein belongs to the UreF family. UreD, UreF and UreG form a complex that acts as a GTP-hydrolysis-dependent molecular chaperone, activating the urease apoprotein by helping to assemble the nickel containing metallocenter of UreC. The UreE protein probably delivers the nickel.

It is found in the cytoplasm. In terms of biological role, required for maturation of urease via the functional incorporation of the urease nickel metallocenter. This is Urease accessory protein UreF from Rhizobium leguminosarum bv. trifolii (strain WSM2304).